We begin with the raw amino-acid sequence, 666 residues long: Probable potassium transport system protein Kup (666 aa).

12 helical membrane passes run 16–36 (GFII…LYTM), 58–78 (ISLI…LIAL), 100–120 (PWLI…GALT), 141–161 (IYQN…VLFG), 165–185 (FGTG…FSFL), 221–241 (IFIL…YSDL), 253–273 (WPFV…WILA), 294–314 (VYLV…LISG), 343–363 (LYIP…VLAF), 373–393 (YGLA…YYLI), 399–419 (PILA…FFLA), and 424–444 (FMHG…VMFI).

Belongs to the HAK/KUP transporter (TC 2.A.72) family.

Its subcellular location is the cell membrane. It catalyses the reaction K(+)(in) + H(+)(in) = K(+)(out) + H(+)(out). Transport of potassium into the cell. Likely operates as a K(+):H(+) symporter. This Streptococcus pyogenes serotype M49 (strain NZ131) protein is Probable potassium transport system protein Kup.